The chain runs to 235 residues: Ubiquinone biosynthesis O-methyltransferase (235 aa).

Residues arginine 39, glycine 59, aspartate 80, and methionine 124 each contribute to the S-adenosyl-L-methionine site.

It belongs to the methyltransferase superfamily. UbiG/COQ3 family.

It catalyses the reaction a 3-demethylubiquinol + S-adenosyl-L-methionine = a ubiquinol + S-adenosyl-L-homocysteine + H(+). The catalysed reaction is a 3-(all-trans-polyprenyl)benzene-1,2-diol + S-adenosyl-L-methionine = a 2-methoxy-6-(all-trans-polyprenyl)phenol + S-adenosyl-L-homocysteine + H(+). It functions in the pathway cofactor biosynthesis; ubiquinone biosynthesis. In terms of biological role, O-methyltransferase that catalyzes the 2 O-methylation steps in the ubiquinone biosynthetic pathway. This Photobacterium profundum (strain SS9) protein is Ubiquinone biosynthesis O-methyltransferase.